We begin with the raw amino-acid sequence, 666 residues long: Transketolase (666 aa).

Histidine 26 lines the substrate pocket. Thiamine diphosphate is bound by residues histidine 66 and 114-116 (GPL). Mg(2+) is bound at residue aspartate 155. Thiamine diphosphate contacts are provided by glycine 156 and asparagine 185. 2 residues coordinate Mg(2+): asparagine 185 and isoleucine 187. Substrate is bound by residues histidine 261, arginine 358, and serine 385. Residue histidine 261 participates in thiamine diphosphate binding. Catalysis depends on glutamate 411, which acts as the Proton donor. Residue phenylalanine 437 participates in thiamine diphosphate binding. Residues histidine 461, aspartate 469, and arginine 520 each contribute to the substrate site.

Belongs to the transketolase family. Homodimer. Mg(2+) serves as cofactor. Requires Ca(2+) as cofactor. It depends on Mn(2+) as a cofactor. The cofactor is Co(2+). Thiamine diphosphate is required as a cofactor.

The catalysed reaction is D-sedoheptulose 7-phosphate + D-glyceraldehyde 3-phosphate = aldehydo-D-ribose 5-phosphate + D-xylulose 5-phosphate. Catalyzes the transfer of a two-carbon ketol group from a ketose donor to an aldose acceptor, via a covalent intermediate with the cofactor thiamine pyrophosphate. The sequence is that of Transketolase (tkt) from Buchnera aphidicola subsp. Baizongia pistaciae (strain Bp).